Consider the following 67-residue polypeptide: UPF0337 protein CC_0938 (67 aa).

The segment at 37–67 (AAQKAKGDLQNKVGKAQDKARRRDQALNARL) is disordered. Positions 41–61 (AKGDLQNKVGKAQDKARRRDQ) are enriched in basic and acidic residues.

It belongs to the UPF0337 (CsbD) family.

In Caulobacter vibrioides (strain ATCC 19089 / CIP 103742 / CB 15) (Caulobacter crescentus), this protein is UPF0337 protein CC_0938.